Here is a 1798-residue protein sequence, read N- to C-terminus: Non-reducing polyketide synthase nscA (1798 aa).

An N-terminal acylcarrier protein transacylase domain (SAT) region spans residues 25–256; it reads RRLDQHSKDR…PLPVYDGLCH (232 aa). Residues 392–825 enclose the Ketosynthase family 3 (KS3) domain; the sequence is SSKLAIVGMA…GGNTTLLLED (434 aa). Active-site for beta-ketoacyl synthase activity residues include C565, H700, and H743. The interval 931–1224 is malonyl-CoA:ACP transacylase (MAT) domain; the sequence is FTGQGAYYHG…LVRSMIPSAP (294 aa). Residues 1322 to 1458 form an N-terminal hotdog fold region; it reads HQITAETVRT…ATILFEDPGA (137 aa). The 311-residue stretch at 1322–1632 folds into the PKS/mFAS DH domain; that stretch reads HQITAETVRT…FRRVPRLLMD (311 aa). Residue H1354 is the Proton acceptor; for dehydratase activity of the active site. A product template (PT) domain region spans residues 1390-1628; it reads HMNLTDVEVL…GMIRFRRVPR (239 aa). The interval 1486-1632 is C-terminal hotdog fold; sequence ASRLSKPLAY…FRRVPRLLMD (147 aa). The Proton donor; for dehydratase activity role is filled by D1543. Positions 1695-1721 are disordered; the sequence is LLATSSGDSTPKEPPIVTPAESERAGP. The region spanning 1721-1798 is the Carrier domain; it reads PVDNNMISQC…EMTAWIEEYC (78 aa). O-(pantetheine 4'-phosphoryl)serine is present on S1758.

Pantetheine 4'-phosphate serves as cofactor.

Its pathway is secondary metabolite biosynthesis. Functionally, non-reducing polyketide synthase; part of the gene cluster that mediates the biosynthesis of neosartoricin B, a prenylated anthracenone that probably exhibits T-cell antiproliferative activity, suggestive of a physiological role as an immunosuppressive agent. The non-reducing polyketide synthase nscA probably synthesizes and cyclizes the decaketide backbone. The hydrolase nscB then mediates the product release through hydrolysis followed by spontaneous decarboxylation. The prenyltransferase nscD catalyzes the addition of the dimethylallyl group to the aromatic C5. The FAD-dependent monooxygenase nscC is then responsible for the stereospecific hydroxylation at C2. Neosartoricin B can be converted into two additional compounds neosartoricins C and D. Neosartoricin C is a spirocyclic compound that is cyclized through the attack of C3 hydroxyl on C14, followed by dehydration. On the other hand, neosartoricin D is a further cyclized compound in which attack of C2 on C14 in neosartoricin C results in the formation of the acetal-containing dioxabicyclo-octanone ring. Both of these compounds are novel and possibly represent related metabolites of the gene cluster. This Trichophyton rubrum (strain ATCC MYA-4607 / CBS 118892) (Athlete's foot fungus) protein is Non-reducing polyketide synthase nscA.